The chain runs to 764 residues: Serine/threonine-protein kinase MPS1 (764 aa).

Disordered regions lie at residues 66-95 (EEMDRSSSRSHPPPSMGNLTSGHTSTSSHS), 197-216 (ELPLEDSHQTNFKETKRNTD), and 258-316 (QAAL…KSSI). Over residues 85–95 (TSGHTSTSSHS) the composition is skewed to low complexity. Over residues 201–216 (EDSHQTNFKETKRNTD) the composition is skewed to basic and acidic residues. Low complexity-rich tracts occupy residues 272-292 (KSRSSSSSLSSNNLLANKDNS) and 306-315 (STGSSSSKSS). Positions 440–720 (YEKIELLGRG…LSSTFLQPFM (281 aa)) constitute a Protein kinase domain. Residues 446 to 454 (LGRGGSSRV) and Lys468 contribute to the ATP site. Asp563 acts as the Proton acceptor in catalysis.

It belongs to the protein kinase superfamily. Ser/Thr protein kinase family. In terms of processing, autophosphorylated.

It carries out the reaction L-seryl-[protein] + ATP = O-phospho-L-seryl-[protein] + ADP + H(+). The enzyme catalyses L-threonyl-[protein] + ATP = O-phospho-L-threonyl-[protein] + ADP + H(+). The catalysed reaction is L-tyrosyl-[protein] + ATP = O-phospho-L-tyrosyl-[protein] + ADP + H(+). In terms of biological role, involved in mitotic spindle assembly checkpoint signaling, a process that delays anaphase until chromosomes are bioriented on the spindle, and in the repair of incorrect mitotic kinetochore-spindle microtubule attachments. Phosphorylates SPC105 on MELT motifs; phosphorylation is required for recruitment of the BUB1-BUB3 complex to kinetochores. Phosphorylates CNN1, which contributes to the enrichment of CNN1 on anaphase kinetochores. Implicated in spindle pole body (SPD) duplication. Phosphorylates the SPC29 and SPC110 spindle pole body components. The chain is Serine/threonine-protein kinase MPS1 (MPS1) from Saccharomyces cerevisiae (strain ATCC 204508 / S288c) (Baker's yeast).